A 166-amino-acid chain; its full sequence is Keratin, type II cytoskeletal 68 kDa, component IB (166 aa).

The 41-residue stretch at 1–41 (EAKDDLARLLRDYQDAMNVKLALDVEIATYRKLLEGEECRM) folds into the IF rod domain. Residues 1-41 (EAKDDLARLLRDYQDAMNVKLALDVEIATYRKLLEGEECRM) form a coil 2B region. Positions 42–166 (SGECPSAVSI…FSQSSQRTSR (125 aa)) are tail. The segment covering 122–146 (GFGGGSSGFGSGSGGRSGVSGGGLS) has biased composition (gly residues). Residues 122–166 (GFGGGSSGFGSGSGGRSGVSGGGLSSGSSRGGSVRFSQSSQRTSR) form a disordered region. Residues 147-166 (SGSSRGGSVRFSQSSQRTSR) are compositionally biased toward low complexity.

Belongs to the intermediate filament family. As to quaternary structure, heterotetramer of two type I and two type II keratins.

This chain is Keratin, type II cytoskeletal 68 kDa, component IB, found in Bos taurus (Bovine).